We begin with the raw amino-acid sequence, 481 residues long: Phototropic-responsive NPH3 family protein NPY4 (481 aa).

In terms of domain architecture, BTB spans 29 to 102 (TEIIIIIGNV…CYGITVTLNA (74 aa)). An NPH3 domain is found at 207–450 (DWWVEDLCEL…VQVLFFEQIR (244 aa)). The residue at position 391 (Y391) is a Phosphotyrosine. The interval 456–481 (TGYSTPELTTTTLNTEDDEWDHEKEF) is disordered. The span at 460–469 (TPELTTTTLN) shows a compositional bias: low complexity.

This sequence belongs to the NPH3 family. In terms of tissue distribution, expressed in the hypocotyl cells that would differentiate into vascular bundles. Highly expressed in primary root tips and radicles.

The protein localises to the cell membrane. It is found in the cytoplasm. Its subcellular location is the cytosol. The protein operates within protein modification; protein ubiquitination. Its function is as follows. May act as a substrate-specific adapter of an E3 ubiquitin-protein ligase complex (CUL3-RBX1-BTB) which mediates the ubiquitination and subsequent proteasomal degradation of target proteins. Plays an essential role in auxin-mediated organogenesis and in root gravitropic responses through the control of PIN proteins (e.g. PIN1 and PIN2) polarity in the root tip endodermal cell layer and in shoot epidermis. Recruited to the plasma membrane by PINs (e.g. PIN1 and PIN2) and, in concert with AGC kinases-mediated (e.g. D6PK and PID) PINs phosphorylation, maintains their polarity through limiting lateral diffusion-based escape. The chain is Phototropic-responsive NPH3 family protein NPY4 from Arabidopsis thaliana (Mouse-ear cress).